The chain runs to 375 residues: Tyrosine--tRNA ligase (375 aa).

Positions 37, 168, 172, 175, and 190 each coordinate L-tyrosine. A 'KMSKS' region motif is present at residues 251 to 255 (KMSKS). Residue lysine 254 participates in ATP binding.

It belongs to the class-I aminoacyl-tRNA synthetase family. TyrS type 4 subfamily. Homodimer.

The protein localises to the cytoplasm. The catalysed reaction is tRNA(Tyr) + L-tyrosine + ATP = L-tyrosyl-tRNA(Tyr) + AMP + diphosphate + H(+). Functionally, catalyzes the attachment of tyrosine to tRNA(Tyr) in a two-step reaction: tyrosine is first activated by ATP to form Tyr-AMP and then transferred to the acceptor end of tRNA(Tyr). The protein is Tyrosine--tRNA ligase of Pyrococcus furiosus (strain ATCC 43587 / DSM 3638 / JCM 8422 / Vc1).